Reading from the N-terminus, the 394-residue chain is Lipid-A-disaccharide synthase (394 aa).

The protein belongs to the LpxB family.

It catalyses the reaction 2-N,3-O-bis[(3R)-3-hydroxytetradecanoyl]-alpha-D-glucosaminyl 1-phosphate + UDP-2-N,3-O-bis[(3R)-3-hydroxytetradecanoyl]-alpha-D-glucosamine = lipid A disaccharide (E. coli) + UDP + H(+). The enzyme catalyses a lipid X + a UDP-2-N,3-O-bis[(3R)-3-hydroxyacyl]-alpha-D-glucosamine = a lipid A disaccharide + UDP + H(+). The protein operates within glycolipid biosynthesis; lipid IV(A) biosynthesis; lipid IV(A) from (3R)-3-hydroxytetradecanoyl-[acyl-carrier-protein] and UDP-N-acetyl-alpha-D-glucosamine: step 5/6. Its function is as follows. Condensation of UDP-2,3-diacylglucosamine and 2,3-diacylglucosamine-1-phosphate to form lipid A disaccharide, a precursor of lipid A, a phosphorylated glycolipid that anchors the lipopolysaccharide to the outer membrane of the cell. The chain is Lipid-A-disaccharide synthase from Yersinia pestis.